The sequence spans 410 residues: Mating-type locus allele B6 protein (410 aa).

The variable domain between B alleles stretch occupies residues 1-110; it reads MSRDPKLSLS…VNVASPAVEY (110 aa). Positions 107 to 184 form a DNA-binding region, homeobox; TALE-type; sequence AVEYRNLSED…NARRRSGWSH (78 aa). A highly conserved between B alleles region spans residues 111–410; sequence RNLSEDLPAY…PFFCLSIAFV (300 aa). 3 disordered regions span residues 202 to 224, 278 to 335, and 373 to 393; these read RAKL…PSDD, TPKP…TPEL, and KARG…QQPD. Positions 205 to 219 are enriched in polar residues; it reads LSSSNQSTPPSLTSE. A Nuclear localization signal motif is present at residues 276 to 308; sequence KKTPKPGMPRPVTTVAKRQPARKTKPAAKPKSR. The segment covering 294–307 has biased composition (basic residues); it reads QPARKTKPAAKPKS. Polar residues predominate over residues 312–335; sequence PRASTTPSIDSTLDSSKLESTPEL. A not essential for B6 function region spans residues 333–410; sequence PELSMCSTAD…PFFCLSIAFV (78 aa). Over residues 375 to 388 the composition is skewed to basic residues; the sequence is RGNRKVKALPKRAG.

The protein belongs to the TALE/M-ATYP homeobox family.

Its subcellular location is the nucleus. The B locus has at least 25 alleles, and any combination of two different B alleles yields a multimeric regulatory protein, that activates genes responsible for the pathogenicity and for the sexual development of the fungus within the corn plant. The polypeptide is Mating-type locus allele B6 protein (Mycosarcoma maydis (Corn smut fungus)).